We begin with the raw amino-acid sequence, 469 residues long: Light-independent protochlorophyllide reductase subunit N (469 aa).

[4Fe-4S] cluster is bound by residues C24, C49, and C109.

This sequence belongs to the BchN/ChlN family. In terms of assembly, protochlorophyllide reductase is composed of three subunits; ChlL, ChlN and ChlB. Forms a heterotetramer of two ChlB and two ChlN subunits. [4Fe-4S] cluster serves as cofactor.

It carries out the reaction chlorophyllide a + oxidized 2[4Fe-4S]-[ferredoxin] + 2 ADP + 2 phosphate = protochlorophyllide a + reduced 2[4Fe-4S]-[ferredoxin] + 2 ATP + 2 H2O. Its pathway is porphyrin-containing compound metabolism; chlorophyll biosynthesis (light-independent). Component of the dark-operative protochlorophyllide reductase (DPOR) that uses Mg-ATP and reduced ferredoxin to reduce ring D of protochlorophyllide (Pchlide) to form chlorophyllide a (Chlide). This reaction is light-independent. The NB-protein (ChlN-ChlB) is the catalytic component of the complex. This is Light-independent protochlorophyllide reductase subunit N from Gloeobacter violaceus (strain ATCC 29082 / PCC 7421).